We begin with the raw amino-acid sequence, 158 residues long: Ribonuclease H (158 aa).

The region spanning 5–146 is the RNase H type-1 domain; sequence MRKQIEIFTD…CDQLAKQGAE (142 aa). Mg(2+) contacts are provided by aspartate 14, glutamate 52, aspartate 74, and aspartate 138.

Belongs to the RNase H family. In terms of assembly, monomer. Mg(2+) is required as a cofactor.

The protein localises to the cytoplasm. It catalyses the reaction Endonucleolytic cleavage to 5'-phosphomonoester.. Functionally, endonuclease that specifically degrades the RNA of RNA-DNA hybrids. In Mannheimia succiniciproducens (strain KCTC 0769BP / MBEL55E), this protein is Ribonuclease H.